Here is a 908-residue protein sequence, read N- to C-terminus: Translation initiation factor IF-2 (908 aa).

Residues 145–312 (EIPGLTQRAK…KGKKRQAEKI (168 aa)) are disordered. Residues 167–177 (VVERPEARPSA) show a composition bias toward basic and acidic residues. Composition is skewed to low complexity over residues 194 to 217 (RPEG…PRPG) and 263 to 276 (VAGA…GAAV). Residues 278 to 296 (KRKEEFKKTELFEKHERVF) are compositionally biased toward basic and acidic residues. Positions 408–577 (KRPPVVTIMG…LLQADVLELK (170 aa)) constitute a tr-type G domain. The segment at 417–424 (GHVDHGKT) is G1. Position 417-424 (417-424 (GHVDHGKT)) interacts with GTP. The tract at residues 442–446 (GITQH) is G2. Positions 463–466 (DTPG) are G3. GTP contacts are provided by residues 463 to 467 (DTPGH) and 517 to 520 (NKID). The tract at residues 517–520 (NKID) is G4. Residues 553–555 (SAK) form a G5 region.

It belongs to the TRAFAC class translation factor GTPase superfamily. Classic translation factor GTPase family. IF-2 subfamily.

It localises to the cytoplasm. Functionally, one of the essential components for the initiation of protein synthesis. Protects formylmethionyl-tRNA from spontaneous hydrolysis and promotes its binding to the 30S ribosomal subunits. Also involved in the hydrolysis of GTP during the formation of the 70S ribosomal complex. The protein is Translation initiation factor IF-2 of Geotalea daltonii (strain DSM 22248 / JCM 15807 / FRC-32) (Geobacter daltonii).